We begin with the raw amino-acid sequence, 453 residues long: Ribosomal protein uS12 methylthiotransferase RimO (453 aa).

Residues 3–118 (KKVGIISLGC…IAKVIEEFYS (116 aa)) enclose the MTTase N-terminal domain. [4Fe-4S] cluster is bound by residues Cys-12, Cys-48, Cys-81, Cys-162, Cys-166, and Cys-169. The region spanning 148 to 378 (STNSGYAYLK…MQLQKEIVQR (231 aa)) is the Radical SAM core domain. Residues 381–449 (ESRLEKVYKT…DYDLIGEVIN (69 aa)) form the TRAM domain.

Belongs to the methylthiotransferase family. RimO subfamily. [4Fe-4S] cluster serves as cofactor.

It is found in the cytoplasm. It catalyses the reaction L-aspartate(89)-[ribosomal protein uS12]-hydrogen + (sulfur carrier)-SH + AH2 + 2 S-adenosyl-L-methionine = 3-methylsulfanyl-L-aspartate(89)-[ribosomal protein uS12]-hydrogen + (sulfur carrier)-H + 5'-deoxyadenosine + L-methionine + A + S-adenosyl-L-homocysteine + 2 H(+). Catalyzes the methylthiolation of an aspartic acid residue of ribosomal protein uS12. This Acetivibrio thermocellus (strain ATCC 27405 / DSM 1237 / JCM 9322 / NBRC 103400 / NCIMB 10682 / NRRL B-4536 / VPI 7372) (Clostridium thermocellum) protein is Ribosomal protein uS12 methylthiotransferase RimO.